The sequence spans 333 residues: MGITVIGSLNYDLDTFTDRLPNAGETFRANHFETHAGGKGLNQAAAIGKLKNPSSRYSVRMIGNVGNDTFGKQLKDTLSDCGVDITHVGTYEGINTGTATILIEEKAGGQNRILIVEGANSKTIYDPKQLCEIFPEGKEEEEYVVFQHEIPDPLSIIKWIHANRPNFQIVYNPSPFKAMPKKDWELVDLLVVNEIEGLQIVESVFDNELVEEIREKIKDDFLGEYRKICELLYEKLMNRKKRGIVVMTLGSRGVLFCSHESPEVQFLPAIQNVSVVDTTGAGDTFLGGLVTQLYQGETLSTAIKFSTLASSLTIQRKGAAESMPLYKDVQKDA.

Residues 10–12 (NYD), 38–42 (GKGLN), and glutamate 149 contribute to the substrate site. ATP-binding positions include asparagine 193 and 248-253 (TLGSRG). K(+)-binding residues include aspartate 277 and threonine 279. Position 282 to 283 (282 to 283 (GD)) interacts with ATP. Aspartate 283 contributes to the substrate binding site. Catalysis depends on aspartate 283, which acts as the Proton acceptor. K(+) contacts are provided by threonine 313, arginine 316, glycine 318, and serine 322.

This sequence belongs to the carbohydrate kinase PfkB family. Ribokinase subfamily. As to quaternary structure, homodimer. The cofactor is Mg(2+).

It localises to the cytoplasm. The protein resides in the nucleus. It carries out the reaction D-ribose + ATP = D-ribose 5-phosphate + ADP + H(+). It functions in the pathway carbohydrate metabolism; D-ribose degradation; D-ribose 5-phosphate from beta-D-ribopyranose: step 2/2. Its activity is regulated as follows. Activated by a monovalent cation that binds near, but not in, the active site. The most likely occupant of the site in vivo is potassium. Ion binding induces a conformational change that may alter substrate affinity. Functionally, catalyzes the phosphorylation of ribose at O-5 in a reaction requiring ATP and magnesium. The resulting D-ribose-5-phosphate can then be used either for sythesis of nucleotides, histidine, and tryptophan, or as a component of the pentose phosphate pathway. This chain is Ribokinase, found in Saccharomyces cerevisiae (strain ATCC 204508 / S288c) (Baker's yeast).